Here is a 273-residue protein sequence, read N- to C-terminus: Putative pyruvate, phosphate dikinase regulatory protein (273 aa).

Residue 153–160 (GISRTSKT) participates in ADP binding.

The protein belongs to the pyruvate, phosphate/water dikinase regulatory protein family. PDRP subfamily.

It carries out the reaction N(tele)-phospho-L-histidyl/L-threonyl-[pyruvate, phosphate dikinase] + ADP = N(tele)-phospho-L-histidyl/O-phospho-L-threonyl-[pyruvate, phosphate dikinase] + AMP + H(+). The catalysed reaction is N(tele)-phospho-L-histidyl/O-phospho-L-threonyl-[pyruvate, phosphate dikinase] + phosphate + H(+) = N(tele)-phospho-L-histidyl/L-threonyl-[pyruvate, phosphate dikinase] + diphosphate. Functionally, bifunctional serine/threonine kinase and phosphorylase involved in the regulation of the pyruvate, phosphate dikinase (PPDK) by catalyzing its phosphorylation/dephosphorylation. The chain is Putative pyruvate, phosphate dikinase regulatory protein from Agrobacterium fabrum (strain C58 / ATCC 33970) (Agrobacterium tumefaciens (strain C58)).